A 958-amino-acid polypeptide reads, in one-letter code: MSKKRLYEIAKELGKESKEVVARAKELGLDVKSHSSSVEEAVAAKIAASFKPAAAPKVEAKPAAPKVSAEKKAEKSEPAKPAVAKEEAKPAAPKASAEKKAEKSEPVKPAVAKEEAKPAEPVTPKTEKVAAKPQSRNFKAEREARAKEQAERRKQNKGNNRDQQQNGNRQKNDGRNGGKQGQSNRDNRRFNDQAKKQQGQQKRRNERRQQEDKRSNQAAPRIDFKARAAALKAEQNAEYARSSEERFKQYQAAKEALAQANKRKEPEEIFEEAAKLAEQAQQVQAVVEVVPEKKEPAVDTRRKKQARPDKNRDDYDHEEDGPRKQQKNRSSQNQVRNQKNSNWNNNKKNKKGNNKNNRNQTPKPVTERKFHELPTEFEYTDGMTVAEIAKRIKREPAEIVKKLFMMGVMATQNQSLDGETIELLMVDYGIEAKQKVEVDNADIERFFVEDGYLNEDELVERPPVVTIMGHVDHGKTTLLDTLRNSRVATGEAGGITQHIGAYQIVENGKKITFLDTPGHAAFTSMRARGASVTDITILVVAADDGVMPQTIEAINHSKAANVPIIVAINKIDKPGANPERVIGELAEHGVMSTAWGGDSEFVEISAKFNQNIEELLETVLLVAEIQELKADPTVRAIGTVIEARLDKGKGAVATLLVQQGTLNVQDPIVVGNTFGRVRAMTNDLGRRVKVAGPSTPVSITGLNEAPMAGDHFAVYEDEKSARAAGEERAKRALMKQRQATQRVSLENLFDTLKAGELKSVNVIIKADVQGSVEALSASLQKIDVEGVKVTIVHSAVGAINESDVTLAEASNAFIVGFNVRPTPQARQQAEADDVEIRLHSIIYKVIEEMEEAMKGMLDPEFEEKVIGEAVIRETFKVSKVGTIGGFMVINGKVARDSKVRVIRDGVVIYDGELASLKHYKDDVKEVTNGREGGLMIDGYNDIKMDDVIEAYVMEEIKR.

Residues 50–67 show a composition bias toward low complexity; the sequence is FKPAAAPKVEAKPAAPKV. Disordered regions lie at residues 50–224 and 288–374; these read FKPA…RIDF and EVVP…HELP. Basic and acidic residues-rich tracts occupy residues 68-89, 96-118, and 138-153; these read SAEK…EEAK, SAEK…EAKP, and FKAE…AERR. Positions 157–169 are enriched in low complexity; the sequence is KGNNRDQQQNGNR. Basic and acidic residues-rich tracts occupy residues 185–195 and 290–323; these read RDNRRFNDQAK and VPEK…DGPR. A compositionally biased stretch (low complexity) spans 337–346; it reads NQKNSNWNNN. The span at 365–374 shows a compositional bias: basic and acidic residues; sequence VTERKFHELP. The region spanning 460–627 is the tr-type G domain; that stretch reads ERPPVVTIMG…TVLLVAEIQE (168 aa). The G1 stretch occupies residues 469 to 476; the sequence is GHVDHGKT. 469-476 contributes to the GTP binding site; the sequence is GHVDHGKT. The interval 494 to 498 is G2; that stretch reads GITQH. The interval 515–518 is G3; that stretch reads DTPG. Residues 515–519 and 569–572 contribute to the GTP site; these read DTPGH and NKID. The tract at residues 569–572 is G4; it reads NKID. The segment at 605–607 is G5; that stretch reads SAK.

This sequence belongs to the TRAFAC class translation factor GTPase superfamily. Classic translation factor GTPase family. IF-2 subfamily.

The protein resides in the cytoplasm. Its function is as follows. One of the essential components for the initiation of protein synthesis. Protects formylmethionyl-tRNA from spontaneous hydrolysis and promotes its binding to the 30S ribosomal subunits. Also involved in the hydrolysis of GTP during the formation of the 70S ribosomal complex. The chain is Translation initiation factor IF-2 from Streptococcus pneumoniae serotype 4 (strain ATCC BAA-334 / TIGR4).